Here is a 134-residue protein sequence, read N- to C-terminus: Large ribosomal subunit protein bL17 (134 aa).

This sequence belongs to the bacterial ribosomal protein bL17 family. In terms of assembly, part of the 50S ribosomal subunit. Contacts protein L32.

This Anaplasma marginale (strain Florida) protein is Large ribosomal subunit protein bL17.